The chain runs to 803 residues: Isoamylase 1, chloroplastic (803 aa).

Residues 1–54 constitute a chloroplast transit peptide; that stretch reads MASLPHCLSARPLVVAAAPGRPGPGPGPWLRGGARRRNAAFSAGNAGRRVGLRR. The active-site Nucleophile is aspartate 432. Glutamate 488 functions as the Proton donor in the catalytic mechanism.

It belongs to the glycosyl hydrolase 13 family. Forms a homo-pentamer and a hetero-hexamer composed of five ISA1 and one ISA2. Interacts with FLO6/SIP4. In terms of tissue distribution, highly expressed in developing endosperm. Expressed at low levels in leaves.

The protein resides in the plastid. The protein localises to the chloroplast. The catalysed reaction is Hydrolysis of (1-&gt;6)-alpha-D-glucosidic branch linkages in glycogen, amylopectin and their beta-limit dextrins.. It functions in the pathway glycan biosynthesis; starch biosynthesis. With respect to regulation, inhibited by copper chloride, mercury chloride, ammonium molybdate and para-chloromercuribenzoate. Starch-debranching enzyme involved in amylopectin biosynthesis in endosperm. Functions by removing excess branches or improper branches that interfere with the formation of double helices of the cluster chains of amylopectin and crystallization of starch. Works as ISA1 homooligomer or together with ISA2 as heterooligomer. The heterooligomer ISA1 and ISA2 possesses higher affinity than the ISA1 homooligomer for various branched polyglucans in vitro, but no marked differences exist in chain preferences for debranching of amylopectin and phytoglycogen between these forms. The protein is Isoamylase 1, chloroplastic of Oryza sativa subsp. japonica (Rice).